The chain runs to 421 residues: Histidine--tRNA ligase (421 aa).

The protein belongs to the class-II aminoacyl-tRNA synthetase family. As to quaternary structure, homodimer.

The protein localises to the cytoplasm. The catalysed reaction is tRNA(His) + L-histidine + ATP = L-histidyl-tRNA(His) + AMP + diphosphate + H(+). The protein is Histidine--tRNA ligase of Alkaliphilus oremlandii (strain OhILAs) (Clostridium oremlandii (strain OhILAs)).